The following is a 206-amino-acid chain: Peptidyl-tRNA hydrolase (206 aa).

Position 14 (Tyr-14) interacts with tRNA. His-19 functions as the Proton acceptor in the catalytic mechanism. TRNA contacts are provided by Phe-64 and Asn-66. The interval 185 to 206 is disordered; that stretch reads VNGEAPKKSKDQAKEPANEQPR. A compositionally biased stretch (basic and acidic residues) spans 189–206; the sequence is APKKSKDQAKEPANEQPR.

Belongs to the PTH family. In terms of assembly, monomer.

It localises to the cytoplasm. The catalysed reaction is an N-acyl-L-alpha-aminoacyl-tRNA + H2O = an N-acyl-L-amino acid + a tRNA + H(+). Hydrolyzes ribosome-free peptidyl-tRNAs (with 1 or more amino acids incorporated), which drop off the ribosome during protein synthesis, or as a result of ribosome stalling. Functionally, catalyzes the release of premature peptidyl moieties from peptidyl-tRNA molecules trapped in stalled 50S ribosomal subunits, and thus maintains levels of free tRNAs and 50S ribosomes. The protein is Peptidyl-tRNA hydrolase of Herpetosiphon aurantiacus (strain ATCC 23779 / DSM 785 / 114-95).